We begin with the raw amino-acid sequence, 127 residues long: Large ribosomal subunit protein uL24 (127 aa).

The protein belongs to the universal ribosomal protein uL24 family. Part of the 50S ribosomal subunit.

Its function is as follows. One of two assembly initiator proteins, it binds directly to the 5'-end of the 23S rRNA, where it nucleates assembly of the 50S subunit. One of the proteins that surrounds the polypeptide exit tunnel on the outside of the subunit. The sequence is that of Large ribosomal subunit protein uL24 from Leptospira biflexa serovar Patoc (strain Patoc 1 / ATCC 23582 / Paris).